A 419-amino-acid polypeptide reads, in one-letter code: Squamosa promoter-binding-like protein 2 (419 aa).

Positions 77 to 96 (SAEVRTHNFTSETGESLPGE) are disordered. The SBP-type zinc-finger motif lies at 166-243 (TPHCQVEGCN…SDHNARRRKP (78 aa)). The Zn(2+) site is built by C169, C174, C191, H194, C210, C213, H217, and C229. The Bipartite nuclear localization signal signature appears at 226–242 (KRSCRRRLSDHNARRRK). Residues 230–249 (RRRLSDHNARRRKPNPGRTY) are disordered.

Requires Zn(2+) as cofactor.

It localises to the nucleus. Trans-acting factor that binds specifically to the consensus nucleotide sequence 5'-TNCGTACAA-3'. In Arabidopsis thaliana (Mouse-ear cress), this protein is Squamosa promoter-binding-like protein 2 (SPL2).